Consider the following 573-residue polypeptide: PCNA-interacting partner (573 aa).

Disordered stretches follow at residues 470-505 (VGKARIEASSENAHVGRWKGDKLPRKSTQRQISKGK) and 531-560 (PKVPSGSHSKAGGKLAQGTKGNRCPARGKL).

It belongs to the PARI family. As to quaternary structure, interacts with RAD51 and PCNA. Interacts with PARP1. Interacts with TASOR. Expressed in the ovary, Sertoli cells of the testis and in granular cells within the cerebellum.

The protein resides in the cytoplasm. It is found in the nucleus. In terms of biological role, required to suppress inappropriate homologous recombination, thereby playing a central role DNA repair and in the maintenance of genomic stability. Antagonizes homologous recombination by interfering with the formation of the RAD51-DNA homologous recombination structure. Binds single-strand DNA and poly(A) homopolymers. Positively regulate the poly(ADP-ribosyl)ation activity of PARP1; however such function may be indirect. This Mus musculus (Mouse) protein is PCNA-interacting partner (Parpbp).